The sequence spans 3579 residues: MQTREFPQRPLGLLLVLLVVLLQSSLIKSYLIIVHEDTPPGTVIFNASVYKLGSERHYKINAHKSANFVHHLVSVNHKDGQIQLRKALKCDGIYYPNLFTFYVDSTSNRLRSIDYYSLPVRIFVSGHSCNEDRRIEQELHHHHYEEEDNTGYSKRRRRRSTQEMIQLNGNQLEEVFRQNSTEFRAGDLIFGDSFDNEMRHRILSRKRRAVGSPDPLHLQPALHRRISDAKQWISETYASYAIHTTDKWNQICLRRSQFINSLNAFLPRSVCQHCKVSFLDVNDERFAIEHQSRDLVASRDVCIAESMWKVSITFNIRCDRRDIVDSDHRLKIVYHHQEFNDTDIARRVRRELRNQSPYFEQALYVASVLEEQPAGAAVTTVRARDPEDSPVVYSMVSLLDSRSQSLFKVDSRTGVVTTSASLDRELMDVHYFRVVATDDSFPPRSGTTTLQVNVLDCNDHSPTFEAEQFEASIREGATVGSTVITLRATDQDIGKNAEIEYGIEAVTDGAGLAQDQEMPIFRIDSRSGVISTRSSLDRETSDSYHLLVTAADLASAQSERRTATASVQVKVLDDNDNYPQFSERTYTVQVPEDQWGGTEDNTVAHIRATDADQGNNAAIRYAIIGGNTQSQFSIDSMSGDVSLVKPLDYESVRSYRLVIRAQDGGSPSRSNTTQLLVNVIDANDNAPRFYTSQFQESVLENVPVGYNIIRVQAYDSDEGANAEITYSISERDDNFPLAVDPRTGWVQTIKPLDREEQGRFAFQVVAKDGGVPPKSASSSVVITVQDVNDNDPAFNPKYYEANVGEDQPPGTPVTTVTATDPDEDSRLHYEITTGNTRGRFAITSQNGRGLITIAQSLDYKQEKRFLLTVAATDSGGRSDTATVHINITDANNFAPIFENAPYSASVFEDAPVGTTVLVVSATDSDVGVNAQITYSLNEESINGLGSPDPFSINPQTGAIVTNAPLDRETTSGYLLTVTAKDGGNPSLSDTTDVEIGVTDVNDNAPAFKSPLYQASILEDALVGTSVIQVAASDPDVGLNGRIKYLLSDRDIEDGSFVIDPTSGTIRTNKGLDRESVAVFHLTAIAVDKGSPPLSSTVEVQIRLEDVNDSPPTFASDKITLYVPENSPVGSVVGEIHAHDPDEGVNAVVHYSIIGGDDSNAFSLVTRPGSERAQLLTMTELDYESTRKRFELVVRAASPPLRNDAHIEILVTDVNDNAPVLRDFQVIFNNFRDHFPSGEIGRIPAFDADVSDKLHYRILSGNNANLLRLNSSSGGLVLSPQLNTNVPKFATMEVSVSDGINEAKAIMQLSVRLITEDMLFNSVTVRLNEMTEEAFLSPLLNFFLDGLAAIIPCPKEHIFVFSIQDDTDVSSRILNVSFSARRPDVSHEEFYTPQYLQERVYLNRAILARLATVEVLPFDDNLCVREPCLNFEECLTVLKFGNASEFIHSDTVLFRPIYPVNTFACSCPEGFTGSKEHYLCDTEVDLCYSDPCQNGGTCVRREGGYTCVCPSTHTGQNCETGVGHLRPCPSETCEGGLSCLSNYPSSQPPPYTATCELRARAFGRNSFLTFESLKQRHRFNLKLRFATVQENGLLLYNGRYNELHDFIALEIHEGHVSFSFSLGDHSERISVIQEAKVSDGKWHQVEVVYLNRSVTLVLDNCDTAIALSGQLGDRWSCANRTTLKLDKRCSLLTETCHRFLDLTGPLQVGGLPRIPAHFPVTNRDFVGCISDLRIDDRFVDLNSYVADNGTLAGCPQKAPLCQSEPCFNGGTCREGWGTYSCECPEGYAGNSCQDNIPAPWRFSGDGSLSFNPLLRPIQLPWTTSFSLRTRQKEAFLLQIQIGQNSSAAVCLRQGVLYYIFDGEPMYLAGAFLSDGEWHRVEIRWQQGSEIHFSVDYGQRSGSVPMSQKVQGLYVGKIVMGSPDGSIGAVPEASPFEGCIQDVRIGAGQSVLSRPTIRENVEDGCESRAQCPDHCPNHSSCQSSWDLSTCECDSGYVGTDCAPICTVRPCASGVCRANTSLPRGYDCECNSSSRHGDYCEKELQQPCPGGWWGERVCGPCRCDLAQGYHPDCNKTTGQCYCKTNHYQPPNETACLSCDCYSIGSFSGACNPLTGQCECREGVIGRRCDSCSNPYAEVTLSGCEVVYDACPRSFAGGVWWPRTPLGGVAIEGCPPPARGKGQRSCDVQSGSWNTPDMYNCTSEPFVELRRQLSQLEKLELELNSFVAIKMAEQLRKACEAVDRRGASKDQKISGNGRPNRRYKMESSFLLSNGGNVWSHELEMDYLSDELKFTHDRLYGADLLVTEGLLQELINYELMQSGLNLSHSQDKYFIKNLVDAASVILDRKYEAEWRRATELIQRGPDDLVDAFNKYLVVLARSQHDTYTSPFEIVQPNMALGLDIVTTESLFGYEPEQLSEYHRSKYLKPNAFTTESVVLPDTSGFLQHSARQRPVISFPKYNNYILDRRKFDQHTKVLVPLEMLGITPPESDEISQSGRRGSSHDHRAIVAYAQYKDVGQLLPDLYDETITRRWGVDVELATPILSLQILVPSMEREQETQRLEIPSRKIFSSSSPSSSSSSGSTEQQFVEVFDVPKAPTSSSEQQIEDIRITAHEIPPPVSSVEQQEASSDEDGEEREPHIRLNLDDIEFHGNSGEEVISPDSPEMLNPNYEGVSSTGSDEQPKGENEAVYRDRRLVKRQVEITYPSEQMQQTEQVVYRSLGSPHLAQPIKLQMWLDVDSARFGPRSNPQCVRWNSFTNQWTRLGCQTEIPDFDGDFNPAAQQAILVNCSCTHISSYAVIVDVIDPEDIPEPSLLVQITSYSAFLVSLPLLLGVLLALALLRGQQTNSNTIHQNIVLCVFCAELLFFVGMQSRRQLLESEFPCKLTAICLHYFWLAAFAWTTVDCVHLYRMLTEMRDINHGPMGFYFAMGYGAPAIVVGLSVGVRAHEYGNSLFCWLSVYEPVVWWLVGPIAGMSVVNLLILFVSVKAAFTLKDHVLGFGNLRTLLWLSVVSLPLMGVMWVLAVLAASEHSQLLSLLLSGVVLLHALFCLIGYCIINKRVRENLQRTCLRCMGRKVPLLDSSMVVSNSSHNVNAAARPSNFLASGYDTTTRRNIGISASSTTSRSTAKTSSSPYSDGQLRQTSTSTSNYNSASDAPSFLRGFESSTTGRSRGGEEKPSRRQRKDSDSGSETDGRSLELASSHSSDDDESRTARSSGTHRSTAVSSTPAYLPNITEHVQATTPPELNVVQSPQLFPSVNKPVYAPRWSSQLPDAYLQSPPNIGRWSQDTGSDNEHVHGQAKMTISPNPLPNPDLTDTSYLQQHHNKINMPPSILENIRDAREGYEDSLYGRRGEYPDKYGSYKPPSHYGSEKDYPGGGSGSQTIGHMRSFHPDAAYLSDNIYDKQRTLGSGYLGAKSESPYLSKDRITPDIYGSRDGHYSLKRQPAYATDSLHSVHSLLKNDYHQQQQQQQQHHLQDRLSEGSDKNGYHFPYTAEEDHLPARKLSHTQPPSLHGSQLMQPPGVGLVNDVNNPGLMGRHTLNGGSRHSSRASSPPSTMVAPMQPLGPLTSITDTERNIDDDETTV.

The N-terminal stretch at 1–29 is a signal peptide; sequence MQTREFPQRPLGLLLVLLVVLLQSSLIKS. Over 30–2816 the chain is Extracellular; the sequence is YLIIVHEDTP…EPSLLVQITS (2787 aa). N-linked (GlcNAc...) asparagine glycans are attached at residues N46, N179, and N340. Cadherin domains lie at 360–464, 465–581, 582–689, 690–794, 795–897, 898–1007, 1008–1113, and 1114–1220; these read EQAL…SPTF, EAEQ…YPQF, SERT…APRF, YTSQ…DPAF, NPKY…APIF, ENAP…APAF, KSPL…PPTF, and ASDK…APVL. An N-linked (GlcNAc...) asparagine glycan is attached at N671. N-linked (GlcNAc...) asparagine glycosylation occurs at N886. 3 N-linked (GlcNAc...) asparagine glycosylation sites follow: N1269, N1374, and N1441. In terms of domain architecture, EGF-like 1; calcium-binding spans 1482–1518; the sequence is EVDLCYSDPCQNGGTCVRREGGYTCVCPSTHTGQNCE. Disulfide bonds link C1486–C1497, C1491–C1506, and C1508–C1517. The 198-residue stretch at 1556–1753 folds into the Laminin G-like 1 domain; sequence LRARAFGRNS…VADNGTLAGC (198 aa). N1650, N1678, and N1747 each carry an N-linked (GlcNAc...) asparagine glycan. 4 disulfide bridges follow: C1727–C1753, C1760–C1771, C1765–C1780, and C1782–C1791. Residues 1756–1792 enclose the EGF-like 2; calcium-binding domain; sequence KAPLCQSEPCFNGGTCREGWGTYSCECPEGYAGNSCQ. In terms of domain architecture, Laminin G-like 2 spans 1796-1963; the sequence is PAPWRFSGDG…TIRENVEDGC (168 aa). N1843 carries an N-linked (GlcNAc...) asparagine glycan. 4 cysteine pairs are disulfide-bonded: C1937/C1963, C1969/C1979, C1973/C1988, and C1990/C1999. An EGF-like 3; calcium-binding domain is found at 1965–2000; that stretch reads SRAQCPDHCPNHSSCQSSWDLSTCECDSGYVGTDCA. N1975 is a glycosylation site (N-linked (GlcNAc...) asparagine). N2016, N2028, N2071, and N2088 each carry an N-linked (GlcNAc...) asparagine glycan. Intrachain disulfides connect C2092–C2095, C2097–C2114, C2116–C2125, and C2128–C2140. Residues 2095-2142 enclose the Laminin EGF-like domain; the sequence is CDCYSIGSFSGACNPLTGQCECREGVIGRRCDSCSNPYAEVTLSGCEV. Residues N2196 and N2320 are each glycosylated (N-linked (GlcNAc...) asparagine). Residues 2553 to 2562 are compositionally biased toward basic and acidic residues; the sequence is QETQRLEIPS. 3 disordered regions span residues 2553-2582, 2610-2635, and 2654-2684; these read QETQRLEIPSRKIFSSSSPSSSSSSGSTEQ, HEIPPPVSSVEQQEASSDEDGEEREP, and VISPDSPEMLNPNYEGVSSTGSDEQPKGENE. The segment covering 2567 to 2579 has biased composition (low complexity); the sequence is SSSSPSSSSSSGS. The region spanning 2653 to 2803 is the GAIN-B domain; the sequence is EVISPDSPEM…AVIVDVIDPE (151 aa). Cystine bridges form between C2747–C2785 and C2762–C2787. The GPS stretch occupies residues 2747-2803; that stretch reads CVRWNSFTNQWTRLGCQTEIPDFDGDFNPAAQQAILVNCSCTHISSYAVIVDVIDPE. N2784 carries an N-linked (GlcNAc...) asparagine glycan. A helical transmembrane segment spans residues 2817-2837; sequence YSAFLVSLPLLLGVLLALALL. Topologically, residues 2838–2845 are cytoplasmic; that stretch reads RGQQTNSN. A helical transmembrane segment spans residues 2846 to 2866; it reads TIHQNIVLCVFCAELLFFVGM. Topologically, residues 2867 to 2883 are extracellular; it reads QSRRQLLESEFPCKLTA. Residues 2884 to 2904 traverse the membrane as a helical segment; that stretch reads ICLHYFWLAAFAWTTVDCVHL. Residues 2905–2919 are Cytoplasmic-facing; that stretch reads YRMLTEMRDINHGPM. Residues 2920-2940 traverse the membrane as a helical segment; it reads GFYFAMGYGAPAIVVGLSVGV. At 2941–2959 the chain is on the extracellular side; the sequence is RAHEYGNSLFCWLSVYEPV. A helical transmembrane segment spans residues 2960 to 2980; the sequence is VWWLVGPIAGMSVVNLLILFV. At 2981–3000 the chain is on the cytoplasmic side; that stretch reads SVKAAFTLKDHVLGFGNLRT. Residues 3001–3021 form a helical membrane-spanning segment; the sequence is LLWLSVVSLPLMGVMWVLAVL. Topologically, residues 3022 to 3031 are extracellular; the sequence is AASEHSQLLS. Residues 3032–3052 form a helical membrane-spanning segment; the sequence is LLLSGVVLLHALFCLIGYCII. The Cytoplasmic segment spans residues 3053 to 3579; it reads NKRVRENLQR…RNIDDDETTV (527 aa). Disordered regions lie at residues 3111–3225, 3343–3377, 3458–3486, and 3499–3579; these read GISA…TPAY, LYGRRGEYPDKYGSYKPPSHYGSEKDYPGGGSGSQ, YHQQQQQQQQHHLQDRLSEGSDKNGYHFP, and LSHT…ETTV. Residues 3113–3128 show a composition bias toward low complexity; sequence SASSTTSRSTAKTSSS. Residues 3167-3191 are compositionally biased toward basic and acidic residues; sequence RGGEEKPSRRQRKDSDSGSETDGRS. A phosphoserine mark is found at S3199 and S3200. A compositionally biased stretch (polar residues) spans 3208–3223; it reads ARSSGTHRSTAVSSTP. Positions 3343 to 3352 are enriched in basic and acidic residues; it reads LYGRRGEYPD. The span at 3459-3468 shows a compositional bias: low complexity; it reads HQQQQQQQQH. Residues 3469–3482 are compositionally biased toward basic and acidic residues; sequence HLQDRLSEGSDKNG. A compositionally biased stretch (polar residues) spans 3501–3513; that stretch reads HTQPPSLHGSQLM.

This sequence belongs to the G-protein coupled receptor 2 family. In terms of assembly, interacts with ATP6AP2 (via N-terminus). As to expression, in the pupal wing, expressed at relatively even levels in all regions. Abundant in 6-9 hours embryos. Expressed at higher levels in pupae than larvae.

Its subcellular location is the cell membrane. The protein localises to the apical cell membrane. In terms of biological role, involved in the fz signaling pathway that controls wing tissue polarity. Also mediates homophilic cell adhesion. May play a role in initiating prehair morphogenesis. May play a critical role in tissue polarity and in formation of normal dendrite fields. During planar cell polarity, stabilizes asymmetric PCP domains together with ATP6AP2. This chain is Protocadherin-like wing polarity protein stan (stan), found in Drosophila melanogaster (Fruit fly).